A 500-amino-acid chain; its full sequence is Glucose-6-phosphate 1-dehydrogenase (500 aa).

NADP(+) is bound by residues 18–25 (GASGDLSK), arginine 52, and lysine 155. Residues lysine 155, 185 to 189 (HYLGK), glutamate 223, and aspartate 242 contribute to the D-glucose 6-phosphate site. The active-site Proton acceptor is the histidine 247. Position 338 (lysine 338) interacts with NADP(+). A D-glucose 6-phosphate-binding site is contributed by lysine 341. Residues lysine 347, arginine 351, and arginine 373 each coordinate NADP(+). Position 375 (glutamine 375) interacts with D-glucose 6-phosphate. NADP(+)-binding positions include 381 to 383 (YFK), 401 to 403 (DLT), and tyrosine 483.

It belongs to the glucose-6-phosphate dehydrogenase family.

It is found in the cytoplasm. It localises to the cytosol. It carries out the reaction D-glucose 6-phosphate + NADP(+) = 6-phospho-D-glucono-1,5-lactone + NADPH + H(+). It participates in carbohydrate degradation; pentose phosphate pathway; D-ribulose 5-phosphate from D-glucose 6-phosphate (oxidative stage): step 1/3. Its function is as follows. Catalyzes the rate-limiting step of the oxidative pentose-phosphate pathway, which represents a route for the dissimilation of carbohydrates besides glycolysis. The main function of this enzyme is to provide reducing power (NADPH) and pentose phosphates for fatty acid and nucleic acid synthesis. The chain is Glucose-6-phosphate 1-dehydrogenase from Schizosaccharomyces pombe (strain 972 / ATCC 24843) (Fission yeast).